The following is a 95-amino-acid chain: Aspartyl/glutamyl-tRNA(Asn/Gln) amidotransferase subunit C (95 aa).

It belongs to the GatC family. Heterotrimer of A, B and C subunits.

It carries out the reaction L-glutamyl-tRNA(Gln) + L-glutamine + ATP + H2O = L-glutaminyl-tRNA(Gln) + L-glutamate + ADP + phosphate + H(+). The catalysed reaction is L-aspartyl-tRNA(Asn) + L-glutamine + ATP + H2O = L-asparaginyl-tRNA(Asn) + L-glutamate + ADP + phosphate + 2 H(+). In terms of biological role, allows the formation of correctly charged Asn-tRNA(Asn) or Gln-tRNA(Gln) through the transamidation of misacylated Asp-tRNA(Asn) or Glu-tRNA(Gln) in organisms which lack either or both of asparaginyl-tRNA or glutaminyl-tRNA synthetases. The reaction takes place in the presence of glutamine and ATP through an activated phospho-Asp-tRNA(Asn) or phospho-Glu-tRNA(Gln). The polypeptide is Aspartyl/glutamyl-tRNA(Asn/Gln) amidotransferase subunit C (Gluconacetobacter diazotrophicus (strain ATCC 49037 / DSM 5601 / CCUG 37298 / CIP 103539 / LMG 7603 / PAl5)).